The primary structure comprises 126 residues: Holo-[acyl-carrier-protein] synthase (126 aa).

Mg(2+) contacts are provided by aspartate 9 and glutamate 58.

Belongs to the P-Pant transferase superfamily. AcpS family. It depends on Mg(2+) as a cofactor.

It is found in the cytoplasm. The enzyme catalyses apo-[ACP] + CoA = holo-[ACP] + adenosine 3',5'-bisphosphate + H(+). Transfers the 4'-phosphopantetheine moiety from coenzyme A to a Ser of acyl-carrier-protein. In Klebsiella pneumoniae (strain 342), this protein is Holo-[acyl-carrier-protein] synthase.